The sequence spans 311 residues: Pyrimidine-specific ribonucleoside hydrolase RihA (311 aa).

His-240 is a catalytic residue.

This sequence belongs to the IUNH family. RihA subfamily.

Hydrolyzes with equal efficiency cytidine or uridine to ribose and cytosine or uracil, respectively. The chain is Pyrimidine-specific ribonucleoside hydrolase RihA from Escherichia coli O8 (strain IAI1).